Reading from the N-terminus, the 389-residue chain is UDP-GlcNAc:betaGal beta-1,3-N-acetylglucosaminyltransferase 8 (389 aa).

Topologically, residues 1–7 are cytoplasmic; the sequence is MRCRKCQ. A helical; Signal-anchor for type II membrane protein transmembrane segment spans residues 8–24; sequence LCLSALLTLLGLKVYIE. Residues 25-389 lie on the Lumenal side of the membrane; the sequence is WTSESWLKKA…RHLWVPELQC (365 aa). The segment at 36–57 is disordered; sequence PRGALPSPTPPNAEPTLPTNLS. N-linked (GlcNAc...) asparagine glycans are attached at residues Asn55 and Asn212.

This sequence belongs to the glycosyltransferase 31 family. Interacts with B3GNT2; this interaction greatly increases B3GNT2 catalytic activity, independently of B3GNT8 enzymatic activity.

The protein localises to the golgi apparatus membrane. It functions in the pathway protein modification; protein glycosylation. Its function is as follows. Beta-1,3-N-acetylglucosaminyltransferase that plays a role in the elongation of specific branch structures of multiantennary N-glycans. Has strong activity towards tetraantennary N-glycans and 2,6 triantennary glycans. This is UDP-GlcNAc:betaGal beta-1,3-N-acetylglucosaminyltransferase 8 from Mus musculus (Mouse).